We begin with the raw amino-acid sequence, 147 residues long: Cyanate hydratase (147 aa).

Catalysis depends on residues Arg88, Glu91, and Ser114.

It belongs to the cyanase family.

It carries out the reaction cyanate + hydrogencarbonate + 3 H(+) = NH4(+) + 2 CO2. Its function is as follows. Catalyzes the reaction of cyanate with bicarbonate to produce ammonia and carbon dioxide. The chain is Cyanate hydratase from Methylibium petroleiphilum (strain ATCC BAA-1232 / LMG 22953 / PM1).